The following is a 247-amino-acid chain: Terpene cyclase ausL (247 aa).

A run of 6 helical transmembrane segments spans residues 49–69 (AIAV…AWIY), 75–95 (HWQG…AATL), 114–134 (LVLL…CLAL), 138–158 (GALG…SGAV), 171–191 (SLVI…KLCI), and 206–226 (PMCW…PVLY).

It belongs to the paxB family.

It is found in the membrane. The protein operates within secondary metabolite biosynthesis; terpenoid biosynthesis. In terms of biological role, terpene cyclase; part of the gene cluster that mediates the biosynthesis of calidodehydroaustin, a fungal meroterpenoid. The first step of the pathway is the synthesis of 3,5-dimethylorsellinic acid by the polyketide synthase ausA. 3,5-dimethylorsellinic acid is then prenylated by the polyprenyl transferase ausN. Further epoxidation by the FAD-dependent monooxygenase ausM and cyclization by the probable terpene cyclase ausL lead to the formation of protoaustinoid A. Protoaustinoid A is then oxidized to spiro-lactone preaustinoid A3 by the combined action of the FAD-binding monooxygenases ausB and ausC, and the dioxygenase ausE. Acid-catalyzed keto-rearrangement and ring contraction of the tetraketide portion of preaustinoid A3 by ausJ lead to the formation of preaustinoid A4. The aldo-keto reductase ausK, with the help of ausH, is involved in the next step by transforming preaustinoid A4 into isoaustinone which is in turn hydroxylated by the P450 monooxygenase ausI to form austinolide. The cytochrome P450 monooxygenase ausG modifies austinolide to austinol. Austinol is further acetylated to austin by the O-acetyltransferase ausP, which spontaneously changes to dehydroaustin. The cytochrome P450 monooxygenase ausR then converts dehydroaustin is into 7-dehydrodehydroaustin. The hydroxylation catalyzed by ausR permits the O-acetyltransferase ausQ to add an additional acetyl group to the molecule, leading to the formation of acetoxydehydroaustin. The short chain dehydrogenase ausT catalyzes the reduction of the double bond present between carbon atoms 1 and 2 to convert 7-dehydrodehydroaustin into 1,2-dihydro-7-hydroxydehydroaustin. AusQ catalyzes not only an acetylation reaction but also the addition of the PKS ausV diketide product to 1,2-dihydro-7-hydroxydehydroaustin, forming precalidodehydroaustin. Finally, the iron/alpha-ketoglutarate-dependent dioxygenase converts precalidodehydroaustin into calidodehydroaustin. The chain is Terpene cyclase ausL from Aspergillus calidoustus.